Here is a 252-residue protein sequence, read N- to C-terminus: Pimeloyl-[acyl-carrier protein] methyl ester esterase (252 aa).

The AB hydrolase-1 domain occupies 15 to 239 (LVMLHGWAMH…FPHCGHAPFL (225 aa)). Substrate contacts are provided by residues Trp21, 81-82 (SL), and 143-147 (FLTLQ). Residue Ser81 is the Nucleophile of the active site. Residues Asp207 and His235 contribute to the active site. His235 is a binding site for substrate.

The protein belongs to the AB hydrolase superfamily. Carboxylesterase BioH family. In terms of assembly, monomer.

It localises to the cytoplasm. The enzyme catalyses 6-carboxyhexanoyl-[ACP] methyl ester + H2O = 6-carboxyhexanoyl-[ACP] + methanol + H(+). The protein operates within cofactor biosynthesis; biotin biosynthesis. In terms of biological role, the physiological role of BioH is to remove the methyl group introduced by BioC when the pimeloyl moiety is complete. It allows to synthesize pimeloyl-ACP via the fatty acid synthetic pathway through the hydrolysis of the ester bonds of pimeloyl-ACP esters. This chain is Pimeloyl-[acyl-carrier protein] methyl ester esterase, found in Nitrosomonas europaea (strain ATCC 19718 / CIP 103999 / KCTC 2705 / NBRC 14298).